Consider the following 73-residue polypeptide: UPF0352 protein APL_0584 (73 aa).

The protein belongs to the UPF0352 family.

The chain is UPF0352 protein APL_0584 from Actinobacillus pleuropneumoniae serotype 5b (strain L20).